The sequence spans 406 residues: Succinylornithine transaminase (406 aa).

An N6-(pyridoxal phosphate)lysine modification is found at K252.

This sequence belongs to the class-III pyridoxal-phosphate-dependent aminotransferase family. AstC subfamily. The cofactor is pyridoxal 5'-phosphate.

It catalyses the reaction N(2)-succinyl-L-ornithine + 2-oxoglutarate = N-succinyl-L-glutamate 5-semialdehyde + L-glutamate. Its pathway is amino-acid degradation; L-arginine degradation via AST pathway; L-glutamate and succinate from L-arginine: step 3/5. In terms of biological role, catalyzes the transamination of N(2)-succinylornithine and alpha-ketoglutarate into N(2)-succinylglutamate semialdehyde and glutamate. Can also act as an acetylornithine aminotransferase. This Shigella sonnei (strain Ss046) protein is Succinylornithine transaminase.